A 506-amino-acid chain; its full sequence is ATP synthase subunit alpha, mitochondrial (506 aa).

Residue 171–178 (GDRQTGKT) coordinates ATP.

Belongs to the ATPase alpha/beta chains family. As to quaternary structure, F-type ATPases have 2 components, CF(1) - the catalytic core - and CF(0) - the membrane proton channel. CF(1) has five subunits: alpha(3), beta(3), gamma(1), delta(1), epsilon(1). CF(0) has three main subunits: a, b and c.

It localises to the mitochondrion. The protein localises to the mitochondrion inner membrane. Functionally, mitochondrial membrane ATP synthase (F(1)F(0) ATP synthase or Complex V) produces ATP from ADP in the presence of a proton gradient across the membrane which is generated by electron transport complexes of the respiratory chain. F-type ATPases consist of two structural domains, F(1) - containing the extramembraneous catalytic core, and F(0) - containing the membrane proton channel, linked together by a central stalk and a peripheral stalk. During catalysis, ATP synthesis in the catalytic domain of F(1) is coupled via a rotary mechanism of the central stalk subunits to proton translocation. Subunits alpha and beta form the catalytic core in F(1). Rotation of the central stalk against the surrounding alpha(3)beta(3) subunits leads to hydrolysis of ATP in three separate catalytic sites on the beta subunits. Subunit alpha does not bear the catalytic high-affinity ATP-binding sites. The sequence is that of ATP synthase subunit alpha, mitochondrial (ATPA) from Beta vulgaris (Sugar beet).